The sequence spans 93 residues: Cell division protein CrgA (93 aa).

2 consecutive transmembrane segments (helical) span residues 31-51 (VWFV…LMVF) and 70-90 (LGPW…LLTM).

Belongs to the CrgA family.

Its subcellular location is the cell membrane. Involved in cell division. This is Cell division protein CrgA from Mycobacterium marinum (strain ATCC BAA-535 / M).